The following is a 234-amino-acid chain: GTP-binding protein ypt4 (234 aa).

Residue 16-23 (GPSGTGKS) coordinates GTP. An Effector region motif is present at residues 39-47 (SHTVGIDFA). 68 to 72 (DTAGQ) provides a ligand contact to GTP. 2 S-geranylgeranyl cysteine lipidation sites follow: Cys-233 and Cys-234.

The protein belongs to the small GTPase superfamily. Rab family.

It is found in the cell membrane. The protein is GTP-binding protein ypt4 (ypt4) of Schizosaccharomyces pombe (strain 972 / ATCC 24843) (Fission yeast).